The following is a 782-amino-acid chain: Potassium transporter 6 (782 aa).

The Cytoplasmic portion of the chain corresponds to 1–18 (MEIESGSYQNAKKESWRT). Residues 19–39 (VLTLAYQSLGVVYGDLSISPL) traverse the membrane as a helical segment. The Extracellular segment spans residues 40–61 (YVYKSTFAEDIHHSESNEEIFG). The chain crosses the membrane as a helical span at residues 62 to 82 (VLSFIFWTITLVPLLKYVFIV). At 83-153 (LRADDNGEGG…TLEKHGVLQK (71 aa)) the chain is on the cytoplasmic side. A helical membrane pass occupies residues 154–174 (ILLVLALIGTCMVIGDGVLTP). At 175–195 (AISVFSAVSGVELSMSKEHHK) the chain is on the extracellular side. The helical transmembrane segment at 196–216 (YIELPAACVILIGLFALQHYG) threads the bilayer. Over 217-219 (THR) the chain is Cytoplasmic. The chain crosses the membrane as a helical span at residues 220–240 (VGFLFAPVILLWLMCISAIGV). Residues 241–270 (YNIFHWNPHVYQALSPYYMYKFLKKTQSRG) lie on the Extracellular side of the membrane. The chain crosses the membrane as a helical span at residues 271–291 (WMSLGGILLCITGSEAMFADL). The Cytoplasmic portion of the chain corresponds to 292 to 296 (GHFSQ). The chain crosses the membrane as a helical span at residues 297–317 (LSIKIAFTSLVYPSLILAYMG). The Extracellular portion of the chain corresponds to 318–347 (QAAYLSQHHIIESEYNIGFYVSVPERLRWP). A helical membrane pass occupies residues 348–368 (VLVIAILAAVVGSQAIITGTF). Over 369 to 395 (SIIKQCSALGCFPKVKIVHTSSKIHGQ) the chain is Cytoplasmic. Residues 396–416 (IYIPEINWILMVLCLAVTIGF) form a helical membrane-spanning segment. Topologically, residues 417–421 (RDTKR) are extracellular. The next 2 membrane-spanning stretches (helical) occupy residues 422–442 (LGNASGLAVITVMLVTTCLMS) and 443–463 (LVIVLCWHKSVIFAIVFVVFF). Over 464 to 474 (GTIESLYFSAS) the chain is Extracellular. A helical membrane pass occupies residues 475 to 495 (LIKFLEGAWVPIALAFCFLLA). Residues 496–782 (MCTWHYGTLK…TLEVGMIYNV (287 aa)) lie on the Cytoplasmic side of the membrane. Basic and acidic residues predominate over residues 664 to 675 (YESDIDDPDKPG). The tract at residues 664 to 693 (YESDIDDPDKPGTSEIRSPKPKKKSKSKVK) is disordered. The segment covering 682-693 (PKPKKKSKSKVK) has biased composition (basic residues).

This sequence belongs to the HAK/KUP transporter (TC 2.A.72.3) family.

Its subcellular location is the cell membrane. Functionally, probable potassium transporter. The polypeptide is Potassium transporter 6 (POT6) (Arabidopsis thaliana (Mouse-ear cress)).